Here is a 601-residue protein sequence, read N- to C-terminus: Molybdenum cofactor synthesis protein cinnamon (601 aa).

Positions 3–153 (SITFGVLTIS…TISALLPHAV (151 aa)) are MPT adenylyltransferase. Residues 173 to 195 (SAQKSHICPHKTGTGTDSDRNSP) form a disordered region. The segment at 184–596 (TGTGTDSDRN…FPASVLRFDF (413 aa)) is MPT Mo-transferase. Phosphoserine is present on Ser-376.

The protein in the N-terminal section; belongs to the MoaB/Mog family. In the C-terminal section; belongs to the MoeA family. The cofactor is Mg(2+).

The catalysed reaction is molybdopterin + ATP + H(+) = adenylyl-molybdopterin + diphosphate. It catalyses the reaction adenylyl-molybdopterin + molybdate = Mo-molybdopterin + AMP + H(+). The protein operates within cofactor biosynthesis; molybdopterin biosynthesis. Functionally, catalyzes two steps in the biosynthesis of the molybdenum cofactor. In the first step, molybdopterin is adenylated. Subsequently, molybdate is inserted into adenylated molybdopterin and AMP is released. The protein is Molybdenum cofactor synthesis protein cinnamon (cin) of Drosophila melanogaster (Fruit fly).